The primary structure comprises 159 residues: Xanthine dehydrogenase iron-sulfur-binding subunit (159 aa).

One can recognise a 2Fe-2S ferredoxin-type domain in the interval 7–82 (ITIECTINGM…GKEIRTLEGE (76 aa)). Residues Cys44, Cys49, and Cys52 each coordinate [2Fe-2S] cluster.

In terms of assembly, heterotrimer of XdhA, XdhB and XdhC. Requires [2Fe-2S] cluster as cofactor.

Its pathway is purine metabolism; hypoxanthine degradation; urate from hypoxanthine: step 1/2. Functionally, iron-sulfur subunit of the xanthine dehydrogenase complex. This is Xanthine dehydrogenase iron-sulfur-binding subunit (xdhC) from Escherichia coli O157:H7.